The following is a 297-amino-acid chain: Mycothiol acetyltransferase (297 aa).

N-acetyltransferase domains are found at residues 7–156 (VFSD…VTIR) and 153–297 (VTIR…PPPH). Position 38 (Glu-38) interacts with 1D-myo-inositol 2-(L-cysteinylamino)-2-deoxy-alpha-D-glucopyranoside. 79–81 (VVV) serves as a coordination point for acetyl-CoA. Positions 180, 219, and 227 each coordinate 1D-myo-inositol 2-(L-cysteinylamino)-2-deoxy-alpha-D-glucopyranoside. Acetyl-CoA contacts are provided by residues 231–233 (VGV) and 238–244 (QGLGLGR). A 1D-myo-inositol 2-(L-cysteinylamino)-2-deoxy-alpha-D-glucopyranoside-binding site is contributed by Tyr-265. Residue 270–275 (NRPALR) coordinates acetyl-CoA.

The protein belongs to the acetyltransferase family. MshD subfamily. Monomer.

The catalysed reaction is 1D-myo-inositol 2-(L-cysteinylamino)-2-deoxy-alpha-D-glucopyranoside + acetyl-CoA = mycothiol + CoA + H(+). Functionally, catalyzes the transfer of acetyl from acetyl-CoA to desacetylmycothiol (Cys-GlcN-Ins) to form mycothiol. The sequence is that of Mycothiol acetyltransferase from Thermomonospora curvata (strain ATCC 19995 / DSM 43183 / JCM 3096 / KCTC 9072 / NBRC 15933 / NCIMB 10081 / Henssen B9).